Here is an 87-residue protein sequence, read N- to C-terminus: Small ribosomal subunit protein bS20 (87 aa).

It belongs to the bacterial ribosomal protein bS20 family.

Functionally, binds directly to 16S ribosomal RNA. The chain is Small ribosomal subunit protein bS20 from Beijerinckia indica subsp. indica (strain ATCC 9039 / DSM 1715 / NCIMB 8712).